We begin with the raw amino-acid sequence, 122 residues long: MIQAESRLRVADNTGARELLCIRVLGGSRKRYAGVGDIIVATVKEAIPDGMVKKGEVVKAVVVRTKKETRRPDGSYIKFDENAAVLIDKANNPRGTRIFGPVARELREKNFMKIISLAPEVL.

This sequence belongs to the universal ribosomal protein uL14 family. As to quaternary structure, part of the 50S ribosomal subunit. Forms a cluster with proteins L3 and L19. In the 70S ribosome, L14 and L19 interact and together make contacts with the 16S rRNA in bridges B5 and B8.

In terms of biological role, binds to 23S rRNA. Forms part of two intersubunit bridges in the 70S ribosome. This chain is Large ribosomal subunit protein uL14, found in Halothermothrix orenii (strain H 168 / OCM 544 / DSM 9562).